We begin with the raw amino-acid sequence, 87 residues long: Small ribosomal subunit protein uS15c (87 aa).

Belongs to the universal ribosomal protein uS15 family. Part of the 30S ribosomal subunit.

The protein resides in the plastid. It is found in the chloroplast. This chain is Small ribosomal subunit protein uS15c (rps15), found in Nicotiana tabacum (Common tobacco).